The sequence spans 147 residues: Hemoglobin subunit beta (147 aa).

N-acetylvaline is present on Val-2. One can recognise a Globin domain in the interval 3–147; that stretch reads HLTGEEKSAV…VANALAHKYH (145 aa). Thr-13 is modified (phosphothreonine). At Ser-45 the chain carries Phosphoserine. An N6-acetyllysine modification is found at Lys-60. His-64 serves as a coordination point for heme b. At Lys-83 the chain carries N6-acetyllysine. His-93 lines the heme b pocket. Cys-94 carries the S-nitrosocysteine modification. The residue at position 145 (Lys-145) is an N6-acetyllysine.

The protein belongs to the globin family. Heterotetramer of two alpha chains and two beta chains. As to expression, red blood cells.

In terms of biological role, involved in oxygen transport from the lung to the various peripheral tissues. This Callimico goeldii (Goeldi's marmoset) protein is Hemoglobin subunit beta (HBB).